Here is a 91-residue protein sequence, read N- to C-terminus: Acylphosphatase (91 aa).

The 88-residue stretch at 3 to 90 (RVLIRVKGKV…EIYLDFSITQ (88 aa)) folds into the Acylphosphatase-like domain. Catalysis depends on residues Arg-18 and Asn-36.

Belongs to the acylphosphatase family.

It catalyses the reaction an acyl phosphate + H2O = a carboxylate + phosphate + H(+). The protein is Acylphosphatase (acyP) of Shewanella amazonensis (strain ATCC BAA-1098 / SB2B).